Here is a 287-residue protein sequence, read N- to C-terminus: Beta-lactamase GES-2 (287 aa).

A signal peptide spans 1–18; it reads MRFIHALLLAGIAHSAYA. A disulfide bond links Cys63 and Cys233. The active-site Nucleophile; acyl-ester intermediate is Ser64. Residues Lys67, Ser125, and Glu161 each coordinate a beta-lactam.

Belongs to the class-A beta-lactamase family.

The catalysed reaction is a beta-lactam + H2O = a substituted beta-amino acid. With respect to regulation, inhibited by the beta-lactamase-blocking agents clavulanic acid, sulbactam and tazobactam. Functionally, extended-spectrum beta-lactamase (ESBL) which confers resistance to penicillins, as well as first, third and fourth-generation cephalosporins. Has modest carbapenem-hydrolyzing activity. Has cefotaxime-hydrolyzing activity. In Pseudomonas aeruginosa, this protein is Beta-lactamase GES-2.